The following is a 267-amino-acid chain: Trehalose-phosphate phosphatase (267 aa).

The Nucleophile role is filled by aspartate 20. Mg(2+) contacts are provided by aspartate 20, aspartate 22, and aspartate 198. 20–22 (DLD) lines the substrate pocket.

The protein belongs to the trehalose phosphatase family. Mg(2+) serves as cofactor.

It catalyses the reaction alpha,alpha-trehalose 6-phosphate + H2O = alpha,alpha-trehalose + phosphate. Its pathway is glycan biosynthesis; trehalose biosynthesis. Functionally, removes the phosphate from trehalose 6-phosphate to produce free trehalose. The chain is Trehalose-phosphate phosphatase (otsB) from Salmonella typhimurium (strain LT2 / SGSC1412 / ATCC 700720).